The chain runs to 188 residues: Large ribosomal subunit protein eL18 (188 aa).

Lysine 119 is covalently cross-linked (Glycyl lysine isopeptide (Lys-Gly) (interchain with G-Cter in SUMO2)). Serine 130 is modified (phosphoserine). The tract at residues 151–188 (HFGKAPGTPHSHTKPYVRSKGRKFERARGRRASRGYKN) is disordered. Threonine 158 is subject to Phosphothreonine. Composition is skewed to basic residues over residues 161 to 171 (SHTKPYVRSKG) and 178 to 188 (RGRRASRGYKN). Lysine 164 participates in a covalent cross-link: Glycyl lysine isopeptide (Lys-Gly) (interchain with G-Cter in SUMO2).

This sequence belongs to the eukaryotic ribosomal protein eL18 family. As to quaternary structure, component of the large ribosomal subunit.

The protein resides in the cytoplasm. It localises to the cytosol. It is found in the rough endoplasmic reticulum. Component of the large ribosomal subunit. The ribosome is a large ribonucleoprotein complex responsible for the synthesis of proteins in the cell. This chain is Large ribosomal subunit protein eL18 (RPL18), found in Canis lupus familiaris (Dog).